The primary structure comprises 494 residues: Cysteine--tRNA ligase (494 aa).

Cysteine 29 is a Zn(2+) binding site. The 'HIGH' region motif lies at 31–41; that stretch reads LTVSDDAHLGH. The disordered stretch occupies residues 187 to 220; it reads KAGGVSPDDANTHRDDELPPLDGERGQTWASPWG. A compositionally biased stretch (basic and acidic residues) spans 196 to 211; sequence ANTHRDDELPPLDGER. Residues cysteine 230, histidine 255, and glutamate 259 each contribute to the Zn(2+) site. The short motif at 287–291 is the 'KMSKS' region element; it reads KMSSS.

The protein belongs to the class-I aminoacyl-tRNA synthetase family. Zn(2+) serves as cofactor.

It localises to the cytoplasm. The enzyme catalyses tRNA(Cys) + L-cysteine + ATP = L-cysteinyl-tRNA(Cys) + AMP + diphosphate. The sequence is that of Cysteine--tRNA ligase from Halobacterium salinarum (strain ATCC 700922 / JCM 11081 / NRC-1) (Halobacterium halobium).